The chain runs to 211 residues: Uracil phosphoribosyltransferase (211 aa).

5-phospho-alpha-D-ribose 1-diphosphate is bound by residues Arg-78, Arg-103, and Asp-130–Thr-138. Residues Ile-195 and Gly-200–Ala-202 each bind uracil. Asp-201 provides a ligand contact to 5-phospho-alpha-D-ribose 1-diphosphate.

Belongs to the UPRTase family. Requires Mg(2+) as cofactor.

The catalysed reaction is UMP + diphosphate = 5-phospho-alpha-D-ribose 1-diphosphate + uracil. The protein operates within pyrimidine metabolism; UMP biosynthesis via salvage pathway; UMP from uracil: step 1/1. Allosterically activated by GTP. Functionally, catalyzes the conversion of uracil and 5-phospho-alpha-D-ribose 1-diphosphate (PRPP) to UMP and diphosphate. The sequence is that of Uracil phosphoribosyltransferase from Arthrobacter sp. (strain FB24).